The chain runs to 348 residues: Centromere protein N-B (348 aa).

This sequence belongs to the CENP-N/CHL4 family.

Its subcellular location is the nucleus. The protein localises to the chromosome. It localises to the centromere. In terms of biological role, probable component of a centromeric complex involved in assembly of kinetochore proteins, mitotic progression and chromosome segregation. This chain is Centromere protein N-B (cenpn-b), found in Xenopus laevis (African clawed frog).